The sequence spans 214 residues: EEF1A lysine methyltransferase 1 (214 aa).

Residue S2 is modified to N-acetylserine. The residue at position 2 (S2) is a Phosphoserine.

This sequence belongs to the class I-like SAM-binding methyltransferase superfamily. EFM5 family.

Its subcellular location is the cytoplasm. It carries out the reaction L-lysyl-[protein] + 3 S-adenosyl-L-methionine = N(6),N(6),N(6)-trimethyl-L-lysyl-[protein] + 3 S-adenosyl-L-homocysteine + 3 H(+). Protein-lysine methyltransferase that selectively catalyzes the trimethylation of EEF1A at 'Lys-79'. This is EEF1A lysine methyltransferase 1 from Mus musculus (Mouse).